An 889-amino-acid chain; its full sequence is Cytoplasmic aconitate hydratase (889 aa).

Substrate is bound by residues Gln-86 and 205-207; that span reads DSH. [4Fe-4S] cluster is bound by residues Cys-437, Cys-503, and Cys-506. Substrate contacts are provided by residues Arg-536, Arg-541, Arg-699, and 779–780; that span reads SR.

Belongs to the aconitase/IPM isomerase family. In terms of assembly, interacts (when associated with the 4Fe-4S) with FBXL5. Interacts with frataxin(81-210). [4Fe-4S] cluster serves as cofactor.

It localises to the cytoplasm. It is found in the cytosol. The catalysed reaction is citrate = D-threo-isocitrate. Its function is as follows. Bifunctional iron sensor that switches between 2 activities depending on iron availability. Iron deprivation, promotes its mRNA binding activity through which it regulates the expression of genes involved in iron uptake, sequestration and utilization. Binds to iron-responsive elements (IRES) in the untranslated region of target mRNAs preventing for instance the translation of ferritin and aminolevulinic acid synthase and stabilizing the transferrin receptor mRNA. Functionally, conversely, when cellular iron levels are high, binds a 4Fe-4S cluster which precludes RNA binding activity and promotes the aconitase activity, the isomerization of citrate to isocitrate via cis-aconitate. The polypeptide is Cytoplasmic aconitate hydratase (Aco1) (Mus musculus (Mouse)).